The chain runs to 306 residues: MKHFLTLRDFSKEEILSLVNHASELKKEPKKLLQDKTLAMIFEKNSTRTRMAFELAITELGGKALFLSSNDLQLSRGEPVKDTARVIGAMVDFIMMRVNKHENLLEFARYSKAPVINALSELYHPTQVLGDLLTIKEWNKIQNGIAKVAFIGDSNNMCNSWLIAAAILGFEFSIAIPKNYEINPEIWDFAMKQALISGAKISLSHDKFKALKDKDVVITDTWVSMGEENEKERKIKEFEEFMIDEKAMSVANEDAILLHCLPAYRGYEVSEEIFEKHADVIFEEARNRLYVVKALLCFLDNQRGRK.

Residues 46-49 (STRT), glutamine 73, arginine 97, and 124-127 (HPTQ) each bind carbamoyl phosphate. L-ornithine-binding positions include asparagine 156, aspartate 220, and 224 to 225 (SM). Carbamoyl phosphate contacts are provided by residues 260 to 261 (CL) and arginine 288.

Belongs to the aspartate/ornithine carbamoyltransferase superfamily. OTCase family.

The protein resides in the cytoplasm. It carries out the reaction carbamoyl phosphate + L-ornithine = L-citrulline + phosphate + H(+). It participates in amino-acid degradation; L-arginine degradation via ADI pathway; carbamoyl phosphate from L-arginine: step 2/2. In terms of biological role, reversibly catalyzes the transfer of the carbamoyl group from carbamoyl phosphate (CP) to the N(epsilon) atom of ornithine (ORN) to produce L-citrulline. The polypeptide is Ornithine carbamoyltransferase (Campylobacter jejuni subsp. doylei (strain ATCC BAA-1458 / RM4099 / 269.97)).